Reading from the N-terminus, the 268-residue chain is MGTEKESPEPDCQKQFQAAVSVIQNLPKNGSYRPSYEEMLRFYSYYKQATMGPCLVPRPGFWDPIGRYKWDAWNSLGKMSREEAMSAYITEMKLVAQKVIDTVPLGEVAEDMFGYFEPLYQVIPDMPRPPETFLRRVTGWKEQVVNGDVGAVSEPPCLPKEPAPPSPESHSPRDLDSEVFCDSLEQLEPELSSGQHLEESVIPGTAPCPPQRKRGCGAARRGPRSWTCGCWGQFEHYRRACRRCRRGCRAWRACPGPLSSLTLSVRLE.

An ACB domain is found at 12 to 101; that stretch reads CQKQFQAAVS…MKLVAQKVID (90 aa). An acyl-CoA contacts are provided by residues 23–32, 43–47, K69, and Y88; these read IQNLPKNGSY and YSYYK. Residues 151–175 form a disordered region; the sequence is AVSEPPCLPKEPAPPSPESHSPRDL. Pro residues predominate over residues 156-167; sequence PCLPKEPAPPSP. Phosphoserine occurs at positions 166 and 171.

In terms of biological role, binds medium- and long-chain acyl-CoA esters and may function as an intracellular carrier of acyl-CoA esters. This chain is Acyl-CoA-binding domain-containing protein 4 (ACBD4), found in Homo sapiens (Human).